Here is a 227-residue protein sequence, read N- to C-terminus: Translation initiation factor 6 (227 aa).

It belongs to the eIF-6 family.

Functionally, binds to the 50S ribosomal subunit and prevents its association with the 30S ribosomal subunit to form the 70S initiation complex. The chain is Translation initiation factor 6 from Methanococcus aeolicus (strain ATCC BAA-1280 / DSM 17508 / OCM 812 / Nankai-3).